The primary structure comprises 186 residues: Putative manganese efflux pump MntP (186 aa).

Transmembrane regions (helical) follow at residues Met-1 to Ser-21, Leu-39 to Ser-59, Val-61 to Gly-81, Tyr-102 to Ser-122, Val-134 to Gly-156, and Ile-165 to Trp-185.

The protein belongs to the MntP (TC 9.B.29) family.

The protein resides in the cell membrane. Its function is as follows. Probably functions as a manganese efflux pump. In Methanosarcina acetivorans (strain ATCC 35395 / DSM 2834 / JCM 12185 / C2A), this protein is Putative manganese efflux pump MntP.